Reading from the N-terminus, the 529-residue chain is Peptide chain release factor 3 (529 aa).

One can recognise a tr-type G domain in the interval 11-280; sequence AKRRTFAIIS…GLIEWAPQPM (270 aa). GTP-binding positions include 20-27, 88-92, and 142-145; these read SHPDAGKT, DTPGH, and NKLD.

Belongs to the TRAFAC class translation factor GTPase superfamily. Classic translation factor GTPase family. PrfC subfamily.

It localises to the cytoplasm. Its function is as follows. Increases the formation of ribosomal termination complexes and stimulates activities of RF-1 and RF-2. It binds guanine nucleotides and has strong preference for UGA stop codons. It may interact directly with the ribosome. The stimulation of RF-1 and RF-2 is significantly reduced by GTP and GDP, but not by GMP. This is Peptide chain release factor 3 from Enterobacter sp. (strain 638).